We begin with the raw amino-acid sequence, 707 residues long: Transcription termination factor Rho (707 aa).

Disordered stretches follow at residues Met1–Thr38 and Gln76–Gln321. 2 stretches are compositionally biased toward low complexity: residues Ala16–Gly31 and Gln76–Ala93. Residues Arg107 to Ala132 show a composition bias toward basic and acidic residues. The span at Ala153 to Asp163 shows a compositional bias: low complexity. The span at Asp176–Ala188 shows a compositional bias: polar residues. The span at Gln203–Gly213 shows a compositional bias: low complexity. Basic and acidic residues predominate over residues Ala215–Asp265. The segment covering Arg301–Arg315 has biased composition (basic residues). The 76-residue stretch at Leu331–Ala406 folds into the Rho RNA-BD domain. ATP contacts are provided by residues Gly449–Gly454, Lys461–Met466, and Arg492.

This sequence belongs to the Rho family. As to quaternary structure, homohexamer. The homohexamer assembles into an open ring structure.

In terms of biological role, facilitates transcription termination by a mechanism that involves Rho binding to the nascent RNA, activation of Rho's RNA-dependent ATPase activity, and release of the mRNA from the DNA template. The polypeptide is Transcription termination factor Rho (Streptomyces lividans).